The sequence spans 82 residues: Sec-independent protein translocase protein TatA (82 aa).

The helical transmembrane segment at Met1–Gly21 threads the bilayer. The segment at Gly46–Ser82 is disordered. Residues Thr49 to Asp70 show a composition bias toward polar residues. Residues Thr72–Ser82 show a composition bias toward basic and acidic residues.

The protein belongs to the TatA/E family. As to quaternary structure, the Tat system comprises two distinct complexes: a TatABC complex, containing multiple copies of TatA, TatB and TatC subunits, and a separate TatA complex, containing only TatA subunits. Substrates initially bind to the TatABC complex, which probably triggers association of the separate TatA complex to form the active translocon.

Its subcellular location is the cell inner membrane. Functionally, part of the twin-arginine translocation (Tat) system that transports large folded proteins containing a characteristic twin-arginine motif in their signal peptide across membranes. TatA could form the protein-conducting channel of the Tat system. The polypeptide is Sec-independent protein translocase protein TatA (Acidovorax sp. (strain JS42)).